Here is a 308-residue protein sequence, read N- to C-terminus: Methionyl-tRNA formyltransferase (308 aa).

(6S)-5,6,7,8-tetrahydrofolate is bound at residue 110 to 113; the sequence is SLLP.

The protein belongs to the Fmt family.

It catalyses the reaction L-methionyl-tRNA(fMet) + (6R)-10-formyltetrahydrofolate = N-formyl-L-methionyl-tRNA(fMet) + (6S)-5,6,7,8-tetrahydrofolate + H(+). Functionally, attaches a formyl group to the free amino group of methionyl-tRNA(fMet). The formyl group appears to play a dual role in the initiator identity of N-formylmethionyl-tRNA by promoting its recognition by IF2 and preventing the misappropriation of this tRNA by the elongation apparatus. The protein is Methionyl-tRNA formyltransferase of Neisseria meningitidis serogroup C (strain 053442).